Consider the following 167-residue polypeptide: Leptin (167 aa).

The first 21 residues, 1 to 21 (MLCGPLCRFLWLWPYLSYVEA), serve as a signal peptide directing secretion. C117 and C167 are joined by a disulfide.

Belongs to the leptin family.

It localises to the secreted. Key player in the regulation of energy balance and body weight control. Once released into the circulation, has central and peripheral effects by binding LEPR, found in many tissues, which results in the activation of several major signaling pathways. In the hypothalamus, acts as an appetite-regulating factor that induces a decrease in food intake and an increase in energy consumption by inducing anorexinogenic factors and suppressing orexigenic neuropeptides, also regulates bone mass and secretion of hypothalamo-pituitary-adrenal hormones. In the periphery, increases basal metabolism, influences reproductive function, regulates pancreatic beta-cell function and insulin secretion, is pro-angiogenic for endothelial cell and affects innate and adaptive immunity. In the arcuate nucleus of the hypothalamus, activates by depolarization POMC neurons inducing FOS and SOCS3 expression to release anorexigenic peptides and inhibits by hyperpolarization NPY neurons inducing SOCS3 with a consequent reduction on release of orexigenic peptides. In addition to its known satiety inducing effect, has a modulatory role in nutrient absorption. In the intestine, reduces glucose absorption by enterocytes by activating PKC and leading to a sequential activation of p38, PI3K and ERK signaling pathways which exerts an inhibitory effect on glucose absorption. Acts as a growth factor on certain tissues, through the activation of different signaling pathways increases expression of genes involved in cell cycle regulation such as CCND1, via JAK2-STAT3 pathway, or VEGFA, via MAPK1/3 and PI3K-AKT1 pathways. May also play an apoptotic role via JAK2-STAT3 pathway and up-regulation of BIRC5 expression. Pro-angiogenic, has mitogenic activity on vascular endothelial cells and plays a role in matrix remodeling by regulating the expression of matrix metalloproteinases (MMPs) and tissue inhibitors of metalloproteinases (TIMPs). In innate immunity, modulates the activity and function of neutrophils by increasing chemotaxis and the secretion of oxygen radicals. Increases phagocytosis by macrophages and enhances secretion of pro-inflammatory mediators. Increases cytotoxic ability of NK cells. Plays a pro-inflammatory role, in synergy with IL1B, by inducing NOS2 which promotes the production of IL6, IL8 and Prostaglandin E2, through a signaling pathway that involves JAK2, PI3K, MAP2K1/MEK1 and MAPK14/p38. In adaptive immunity, promotes the switch of memory T-cells towards T helper-1 cell immune responses. Increases CD4(+)CD25(-) T-cell proliferation and reduces autophagy during TCR (T-cell receptor) stimulation, through MTOR signaling pathway activation and BCL2 up-regulation. The chain is Leptin (LEP) from Felis catus (Cat).